The sequence spans 538 residues: Probable cytochrome P450 309a2 (538 aa).

Position 483 (cysteine 483) interacts with heme.

This sequence belongs to the cytochrome P450 family. The cofactor is heme.

Its subcellular location is the endoplasmic reticulum membrane. It is found in the microsome membrane. Functionally, may be involved in the metabolism of insect hormones and in the breakdown of synthetic insecticides. This Drosophila melanogaster (Fruit fly) protein is Probable cytochrome P450 309a2 (Cyp309a2).